The following is a 692-amino-acid chain: Aspartate--tRNA ligase, mitochondrial (692 aa).

Residues 1–61 constitute a mitochondrion transit peptide; sequence MNRVILKDSK…RNFTNTINNN (61 aa). Residue Glu-264 participates in L-aspartate binding. The tract at residues 287–290 is aspartate; it reads QQYK. Residue Arg-309 participates in L-aspartate binding. ATP contacts are provided by residues 309–311 and Glu-590; that span reads RDE. L-aspartate is bound at residue Arg-597. 642-645 lines the ATP pocket; sequence GFDR.

Belongs to the class-II aminoacyl-tRNA synthetase family. Type 1 subfamily.

The protein localises to the mitochondrion matrix. The enzyme catalyses tRNA(Asp) + L-aspartate + ATP = L-aspartyl-tRNA(Asp) + AMP + diphosphate. This is Aspartate--tRNA ligase, mitochondrial (maspS) from Dictyostelium discoideum (Social amoeba).